The sequence spans 375 residues: D-apiose dehydrogenase (375 aa).

29–30 (FF) lines the NAD(+) pocket. Residues Trp38, Arg39, Ile41, and Ala44 each contribute to the Mg(2+) site. Residues Asp51, Ser93, 111–112 (QK), Asn140, and 179–181 (QPY) each bind NAD(+). Lys112 contributes to the substrate binding site. Positions 179, 192, 196, and 246 each coordinate substrate.

The protein belongs to the Gfo/Idh/MocA family.

It catalyses the reaction D-apiofuranose + NAD(+) = D-apionolactone + NADH + H(+). The protein operates within carbohydrate metabolism. Functionally, involved in catabolism of D-apiose. Catalyzes oxidation of D-apiose to D-apionolactone. The chain is D-apiose dehydrogenase from Paraburkholderia graminis (strain ATCC 700544 / DSM 17151 / LMG 18924 / NCIMB 13744 / C4D1M).